Here is a 284-residue protein sequence, read N- to C-terminus: Nucleotide-binding protein PputGB1_0956 (284 aa).

8–15 is an ATP binding site; it reads GRSGSGKS. 60 to 63 is a binding site for GTP; sequence DARN.

Belongs to the RapZ-like family.

Its function is as follows. Displays ATPase and GTPase activities. The protein is Nucleotide-binding protein PputGB1_0956 of Pseudomonas putida (strain GB-1).